Consider the following 115-residue polypeptide: uncharacterized protein (115 aa).

This is an uncharacterized protein from Dictyostelium discoideum (Social amoeba).